The following is a 255-amino-acid chain: Aquaporin TIP4-1 (255 aa).

A run of 2 helical transmembrane segments spans residues 25 to 45 (AVLAELVLTFLFVFTGVSAAM) and 61 to 81 (TLAAVAIAHALAAGVLVTAGF). The short motif at 89 to 91 (NPA) is the NPA 1 element. 3 consecutive transmembrane segments (helical) span residues 108–128 (VLYVAAQLLASSAACVLLRFL), 148–168 (GLVMEVILTFSLLFVTYAMIL), and 176–196 (AIGPLLTGLIVGANSLAGGNF). The short motif at 202 to 204 (NPA) is the NPA 2 element. A helical membrane pass occupies residues 223-243 (WIGPLLGGPLAGFVYESLFLV).

This sequence belongs to the MIP/aquaporin (TC 1.A.8) family. TIP (TC 1.A.8.10) subfamily.

It localises to the vacuole membrane. Aquaporins facilitate the transport of water and small neutral solutes across cell membranes. The chain is Aquaporin TIP4-1 (TIP4-1) from Zea mays (Maize).